The chain runs to 514 residues: GTPase Obg (514 aa).

Residues 2–159 (ATFVDRVTVH…GDILLELKTV (158 aa)) enclose the Obg domain. The tract at residues 62 to 88 (RRPHRSSGNGGFGMGDHRSGHTGEDLE) is disordered. Residues 76–85 (GDHRSGHTGE) are compositionally biased toward basic and acidic residues. Residues 160 to 336 (ADIALVGYPS…LSFALAELVE (177 aa)) form the OBG-type G domain. Residues 166 to 173 (GYPSAGKS), 191 to 195 (FTTLH), 212 to 215 (DVPG), 288 to 291 (NKID), and 317 to 319 (STV) each bind GTP. 2 residues coordinate Mg(2+): Ser-173 and Thr-193. The 85-residue stretch at 356–440 (PKTVDDSGFV…ENGVVFDWEP (85 aa)) folds into the OCT domain.

This sequence belongs to the TRAFAC class OBG-HflX-like GTPase superfamily. OBG GTPase family. In terms of assembly, monomer. Mg(2+) is required as a cofactor.

It localises to the cytoplasm. Its function is as follows. An essential GTPase which binds GTP, GDP and possibly (p)ppGpp with moderate affinity, with high nucleotide exchange rates and a fairly low GTP hydrolysis rate. Plays a role in control of the cell cycle, stress response, ribosome biogenesis and in those bacteria that undergo differentiation, in morphogenesis control. The sequence is that of GTPase Obg from Leifsonia xyli subsp. xyli (strain CTCB07).